We begin with the raw amino-acid sequence, 26 residues long: uncharacterized protein (26 aa).

A helical membrane pass occupies residues 3–23 (IIYLILFLIVIYLLYRILDVL).

Its subcellular location is the membrane. This is an uncharacterized protein from Helicobacter pylori (strain J99 / ATCC 700824) (Campylobacter pylori J99).